We begin with the raw amino-acid sequence, 505 residues long: Chromosomal replication initiator protein DnaA (505 aa).

The segment at 1–90 is domain I, interacts with DnaA modulators; that stretch reads MSVELWQQCV…RRSSAPRAAP (90 aa). A domain II region spans residues 91–168; it reads NAPVSAAVAA…QVEGALKHTS (78 aa). A domain III, AAA+ region region spans residues 169 to 385; the sequence is YLNRTFTFDT…GALKRVIAHS (217 aa). ATP-binding residues include Gly-213, Gly-215, Lys-216, and Thr-217. The interval 386–505 is domain IV, binds dsDNA; the sequence is HFMGRDITIE…YKNLLRTLTT (120 aa).

This sequence belongs to the DnaA family. In terms of assembly, oligomerizes as a right-handed, spiral filament on DNA at oriC.

The protein resides in the cytoplasm. Plays an essential role in the initiation and regulation of chromosomal replication. ATP-DnaA binds to the origin of replication (oriC) to initiate formation of the DNA replication initiation complex once per cell cycle. Binds the DnaA box (a 9 base pair repeat at the origin) and separates the double-stranded (ds)DNA. Forms a right-handed helical filament on oriC DNA; dsDNA binds to the exterior of the filament while single-stranded (ss)DNA is stabiized in the filament's interior. The ATP-DnaA-oriC complex binds and stabilizes one strand of the AT-rich DNA unwinding element (DUE), permitting loading of DNA polymerase. After initiation quickly degrades to an ADP-DnaA complex that is not apt for DNA replication. Binds acidic phospholipids. The chain is Chromosomal replication initiator protein DnaA from Pseudomonas putida (strain ATCC 700007 / DSM 6899 / JCM 31910 / BCRC 17059 / LMG 24140 / F1).